We begin with the raw amino-acid sequence, 912 residues long: Protein translocase subunit SecA (912 aa).

ATP contacts are provided by residues glutamine 87, 105–109 (GEGKT), and aspartate 510. Positions 854–912 (KLRHEQASAAQAEGEGDDGQQGQQATPETFVRQERKVGRNEPCPCGSGKKYKQCCGKVS) are disordered. Zn(2+) is bound by residues cysteine 896, cysteine 898, cysteine 907, and cysteine 908.

This sequence belongs to the SecA family. As to quaternary structure, monomer and homodimer. Part of the essential Sec protein translocation apparatus which comprises SecA, SecYEG and auxiliary proteins SecDF-YajC and YidC. It depends on Zn(2+) as a cofactor.

The protein resides in the cell inner membrane. It is found in the cytoplasm. It catalyses the reaction ATP + H2O + cellular proteinSide 1 = ADP + phosphate + cellular proteinSide 2.. Part of the Sec protein translocase complex. Interacts with the SecYEG preprotein conducting channel. Has a central role in coupling the hydrolysis of ATP to the transfer of proteins into and across the cell membrane, serving both as a receptor for the preprotein-SecB complex and as an ATP-driven molecular motor driving the stepwise translocation of polypeptide chains across the membrane. The polypeptide is Protein translocase subunit SecA (Marinobacter nauticus (strain ATCC 700491 / DSM 11845 / VT8) (Marinobacter aquaeolei)).